The following is a 339-amino-acid chain: Phosphate acyltransferase (339 aa).

Belongs to the PlsX family. As to quaternary structure, homodimer. Probably interacts with PlsY.

Its subcellular location is the cytoplasm. The enzyme catalyses a fatty acyl-[ACP] + phosphate = an acyl phosphate + holo-[ACP]. The protein operates within lipid metabolism; phospholipid metabolism. Functionally, catalyzes the reversible formation of acyl-phosphate (acyl-PO(4)) from acyl-[acyl-carrier-protein] (acyl-ACP). This enzyme utilizes acyl-ACP as fatty acyl donor, but not acyl-CoA. The chain is Phosphate acyltransferase from Clostridium perfringens (strain SM101 / Type A).